The sequence spans 230 residues: Large ribosomal subunit protein bL25 (230 aa).

The protein belongs to the bacterial ribosomal protein bL25 family. CTC subfamily. As to quaternary structure, part of the 50S ribosomal subunit; part of the 5S rRNA/L5/L18/L25 subcomplex. Contacts the 5S rRNA. Binds to the 5S rRNA independently of L5 and L18.

In terms of biological role, this is one of the proteins that binds to the 5S RNA in the ribosome where it forms part of the central protuberance. The sequence is that of Large ribosomal subunit protein bL25 (rplY) from Rhodopseudomonas palustris (strain ATCC BAA-98 / CGA009).